The chain runs to 66 residues: Xenoxin-2 (66 aa).

4 disulfide bridges follow: Cys3–Cys24, Cys17–Cys37, Cys43–Cys58, and Cys59–Cys64.

In terms of tissue distribution, expressed by the skin dorsal glands.

The protein resides in the secreted. Lacks alpha-neurotoxic activity, has apparently no antibacterial activity, nor anti-coagulant potency. The protein is Xenoxin-2 of Xenopus laevis (African clawed frog).